The following is a 466-amino-acid chain: Fumarate hydratase class II (466 aa).

Residues 100-102, Arg-128, 131-134, 141-143, and Thr-189 contribute to the substrate site; these read SGT, HPND, and STN. His-190 functions as the Proton donor/acceptor in the catalytic mechanism. Residue Ser-320 is part of the active site. Substrate-binding positions include Ser-321 and 326 to 328; that span reads KVN.

The protein belongs to the class-II fumarase/aspartase family. Fumarase subfamily. Homotetramer.

The protein resides in the cytoplasm. The catalysed reaction is (S)-malate = fumarate + H2O. Its pathway is carbohydrate metabolism; tricarboxylic acid cycle; (S)-malate from fumarate: step 1/1. Involved in the TCA cycle. Catalyzes the stereospecific interconversion of fumarate to L-malate. The chain is Fumarate hydratase class II from Prochlorococcus marinus (strain MIT 9313).